The following is a 189-amino-acid chain: Cell division protein SepF (189 aa).

A disordered region spans residues 25-70 (ESRVQQQAVKPSNSRPAQQEPVRDIKQPRLVSSSSQHVTNTPSSNE). 2 stretches are compositionally biased toward polar residues: residues 27–41 (RVQQQAVKPSNSRPA) and 54–70 (LVSSSSQHVTNTPSSNE).

This sequence belongs to the SepF family. As to quaternary structure, homodimer. Interacts with FtsZ.

The protein resides in the cytoplasm. In terms of biological role, cell division protein that is part of the divisome complex and is recruited early to the Z-ring. Probably stimulates Z-ring formation, perhaps through the cross-linking of FtsZ protofilaments. Its function overlaps with FtsA. The polypeptide is Cell division protein SepF (Streptococcus gordonii (strain Challis / ATCC 35105 / BCRC 15272 / CH1 / DL1 / V288)).